Consider the following 425-residue polypeptide: 26S proteasome regulatory subunit 7 (425 aa).

208 to 215 (GPPGTGKT) lines the ATP pocket.

This sequence belongs to the AAA ATPase family.

It is found in the cytoplasm. It localises to the nucleus. Its function is as follows. The 26S proteasome is involved in the ATP-dependent degradation of ubiquitinated proteins. The regulatory (or ATPase) complex confers ATP dependency and substrate specificity to the 26S complex. The sequence is that of 26S proteasome regulatory subunit 7 (RPT1) from Prunus persica (Peach).